The sequence spans 383 residues: GTP-binding protein 10 homolog (383 aa).

Residues 22-157 (PSFLDTLRLA…RIVNLDLKLI (136 aa)) form the Obg domain. Residues 158 to 353 (ADVGLVGFPN…VKSQLRRTLV (196 aa)) enclose the OBG-type G domain. Residues 164 to 171 (GFPNAGKS), 211 to 215 (DLPGL), and 287 to 290 (NKMD) each bind GTP.

This sequence belongs to the TRAFAC class OBG-HflX-like GTPase superfamily. OBG GTPase family.

It localises to the nucleus. The protein localises to the nucleolus. Functionally, may be involved in the ribosome maturation process. In Drosophila pseudoobscura pseudoobscura (Fruit fly), this protein is GTP-binding protein 10 homolog.